Reading from the N-terminus, the 391-residue chain is Heme A synthase (391 aa).

The next 8 helical transmembrane spans lie at 37 to 57 (IRLW…VGGL), 121 to 141 (RQLG…FLVA), 152 to 172 (LLAL…MVAS), 186 to 206 (LAVH…QALL), 229 to 249 (TTVL…VAGI), 298 to 318 (FLHR…WIFG), 332 to 352 (LLAL…LSAA), and 354 to 374 (WQVA…ILHA). His-300 lines the heme pocket. His-360 provides a ligand contact to heme.

The protein belongs to the COX15/CtaA family. Type 2 subfamily. Interacts with CtaB. Heme b serves as cofactor.

The protein resides in the cell membrane. It catalyses the reaction Fe(II)-heme o + 2 A + H2O = Fe(II)-heme a + 2 AH2. Its pathway is porphyrin-containing compound metabolism; heme A biosynthesis; heme A from heme O: step 1/1. Catalyzes the conversion of heme O to heme A by two successive hydroxylations of the methyl group at C8. The first hydroxylation forms heme I, the second hydroxylation results in an unstable dihydroxymethyl group, which spontaneously dehydrates, resulting in the formyl group of heme A. This chain is Heme A synthase, found in Cereibacter sphaeroides (strain ATCC 17025 / ATH 2.4.3) (Rhodobacter sphaeroides).